Reading from the N-terminus, the 140-residue chain is Large ribosomal subunit protein uL14 (140 aa).

This sequence belongs to the universal ribosomal protein uL14 family. In terms of assembly, component of the large ribosomal subunit.

It localises to the cytoplasm. Functionally, component of the large ribosomal subunit. The ribosome is a large ribonucleoprotein complex responsible for the synthesis of proteins in the cell. The protein is Large ribosomal subunit protein uL14 (rpl23) of Danio rerio (Zebrafish).